A 320-amino-acid polypeptide reads, in one-letter code: Lipoyl synthase (320 aa).

Positions 1-24 (MIGKLVRDLKIPDQRHPEKAHRPD) are enriched in basic and acidic residues. Positions 1–30 (MIGKLVRDLKIPDQRHPEKAHRPDNVQPKK) are disordered. Cys60, Cys65, Cys71, Cys86, Cys90, Cys93, and Ser300 together coordinate [4Fe-4S] cluster. Positions 72–289 (WSQGHATMMI…EKAAYGKGFL (218 aa)) constitute a Radical SAM core domain.

This sequence belongs to the radical SAM superfamily. Lipoyl synthase family. [4Fe-4S] cluster is required as a cofactor.

The protein resides in the cytoplasm. It catalyses the reaction [[Fe-S] cluster scaffold protein carrying a second [4Fe-4S](2+) cluster] + N(6)-octanoyl-L-lysyl-[protein] + 2 oxidized [2Fe-2S]-[ferredoxin] + 2 S-adenosyl-L-methionine + 4 H(+) = [[Fe-S] cluster scaffold protein] + N(6)-[(R)-dihydrolipoyl]-L-lysyl-[protein] + 4 Fe(3+) + 2 hydrogen sulfide + 2 5'-deoxyadenosine + 2 L-methionine + 2 reduced [2Fe-2S]-[ferredoxin]. It participates in protein modification; protein lipoylation via endogenous pathway; protein N(6)-(lipoyl)lysine from octanoyl-[acyl-carrier-protein]: step 2/2. Catalyzes the radical-mediated insertion of two sulfur atoms into the C-6 and C-8 positions of the octanoyl moiety bound to the lipoyl domains of lipoate-dependent enzymes, thereby converting the octanoylated domains into lipoylated derivatives. This chain is Lipoyl synthase, found in Cereibacter sphaeroides (strain ATCC 17029 / ATH 2.4.9) (Rhodobacter sphaeroides).